A 582-amino-acid chain; its full sequence is 5-aminolevulinate synthase, erythroid-specific, mitochondrial (582 aa).

R158 provides a ligand contact to succinyl-CoA. Pyridoxal 5'-phosphate contacts are provided by C253 and F254. Succinyl-CoA contacts are provided by S275 and R294. Positions 327, 355, and 383 each coordinate pyridoxal 5'-phosphate. The active site involves K386. K386 is subject to N6-(pyridoxal phosphate)lysine. The pyridoxal 5'-phosphate site is built by T415 and T416. T503 contacts succinyl-CoA.

The protein belongs to the class-II pyridoxal-phosphate-dependent aminotransferase family. Homodimer. The cofactor is pyridoxal 5'-phosphate.

Its subcellular location is the mitochondrion inner membrane. The catalysed reaction is succinyl-CoA + glycine + H(+) = 5-aminolevulinate + CO2 + CoA. Its pathway is porphyrin-containing compound metabolism; protoporphyrin-IX biosynthesis; 5-aminolevulinate from glycine: step 1/1. Its function is as follows. Catalyzes the pyridoxal 5'-phosphate (PLP)-dependent condensation of succinyl-CoA and glycine to form aminolevulinic acid (ALA), with CoA and CO2 as by-products. Contributes significantly to heme formation during erythropoiesis. This chain is 5-aminolevulinate synthase, erythroid-specific, mitochondrial (alas2), found in Opsanus tau (Oyster toadfish).